The following is a 352-amino-acid chain: S-adenosylmethionine:tRNA ribosyltransferase-isomerase (352 aa).

It belongs to the QueA family. In terms of assembly, monomer.

It localises to the cytoplasm. The enzyme catalyses 7-aminomethyl-7-carbaguanosine(34) in tRNA + S-adenosyl-L-methionine = epoxyqueuosine(34) in tRNA + adenine + L-methionine + 2 H(+). It participates in tRNA modification; tRNA-queuosine biosynthesis. Functionally, transfers and isomerizes the ribose moiety from AdoMet to the 7-aminomethyl group of 7-deazaguanine (preQ1-tRNA) to give epoxyqueuosine (oQ-tRNA). The polypeptide is S-adenosylmethionine:tRNA ribosyltransferase-isomerase (Cupriavidus necator (strain ATCC 17699 / DSM 428 / KCTC 22496 / NCIMB 10442 / H16 / Stanier 337) (Ralstonia eutropha)).